A 398-amino-acid polypeptide reads, in one-letter code: Cysteine protease ATG4A (398 aa).

Cysteine 77 functions as the Nucleophile in the catalytic mechanism. Residues aspartate 279 and histidine 281 contribute to the active site. The LIR signature appears at 393-396 (FEIL).

It belongs to the peptidase C54 family. As to quaternary structure, interacts with ATG9A; the interaction is direct.

The protein resides in the cytoplasm. The catalysed reaction is [protein]-C-terminal L-amino acid-glycyl-phosphatidylethanolamide + H2O = [protein]-C-terminal L-amino acid-glycine + a 1,2-diacyl-sn-glycero-3-phosphoethanolamine. With respect to regulation, inhibited by N-ethylmaleimide. Redox-regulated during autophagy since reducing conditions activate ATG4A whereas an oxidizing environment such as the presence of H(2)O(2) inhibits its activity. Its function is as follows. Cysteine protease that plays a key role in autophagy by mediating both proteolytic activation and delipidation of ATG8 family proteins. The protease activity is required for proteolytic activation of ATG8 family proteins: cleaves the C-terminal amino acid of ATG8 proteins to reveal a C-terminal glycine. Exposure of the glycine at the C-terminus is essential for ATG8 proteins conjugation to phosphatidylethanolamine (PE) and insertion to membranes, which is necessary for autophagy. Preferred substrate is GABARAPL2 followed by MAP1LC3A and GABARAP. Protease activity is also required to counteract formation of high-molecular weight conjugates of ATG8 proteins (ATG8ylation): acts as a deubiquitinating-like enzyme that removes ATG8 conjugated to other proteins, such as ATG3. In addition to the protease activity, also mediates delipidation of ATG8 family proteins. Catalyzes delipidation of PE-conjugated forms of ATG8 proteins during macroautophagy. Compared to ATG4B, the major protein for proteolytic activation of ATG8 proteins, shows weaker ability to cleave the C-terminal amino acid of ATG8 proteins, while it displays stronger delipidation activity. Involved in phagophore growth during mitophagy independently of its protease activity and of ATG8 proteins: acts by regulating ATG9A trafficking to mitochondria and promoting phagophore-endoplasmic reticulum contacts during the lipid transfer phase of mitophagy. The chain is Cysteine protease ATG4A from Homo sapiens (Human).